The chain runs to 181 residues: Shikimate kinase (181 aa).

Position 17-22 (17-22) interacts with ATP; sequence GVGKTT. Thr-21 serves as a coordination point for Mg(2+). Substrate contacts are provided by Asp-39, Arg-63, and Gly-85. Arg-122 lines the ATP pocket. Arg-141 serves as a coordination point for substrate.

This sequence belongs to the shikimate kinase family. As to quaternary structure, monomer. Mg(2+) is required as a cofactor.

It localises to the cytoplasm. The catalysed reaction is shikimate + ATP = 3-phosphoshikimate + ADP + H(+). It participates in metabolic intermediate biosynthesis; chorismate biosynthesis; chorismate from D-erythrose 4-phosphate and phosphoenolpyruvate: step 5/7. In terms of biological role, catalyzes the specific phosphorylation of the 3-hydroxyl group of shikimic acid using ATP as a cosubstrate. The sequence is that of Shikimate kinase from Nostoc punctiforme (strain ATCC 29133 / PCC 73102).